The sequence spans 377 residues: 3-dehydroquinate synthase (377 aa).

Residues 113–117 (GVIGD), 137–138 (TT), K150, and K159 each bind NAD(+). Residues E192, H254, and H273 each coordinate Zn(2+).

It belongs to the sugar phosphate cyclases superfamily. Dehydroquinate synthase family. Requires Co(2+) as cofactor. Zn(2+) is required as a cofactor. It depends on NAD(+) as a cofactor.

It is found in the cytoplasm. It carries out the reaction 7-phospho-2-dehydro-3-deoxy-D-arabino-heptonate = 3-dehydroquinate + phosphate. It participates in metabolic intermediate biosynthesis; chorismate biosynthesis; chorismate from D-erythrose 4-phosphate and phosphoenolpyruvate: step 2/7. In terms of biological role, catalyzes the conversion of 3-deoxy-D-arabino-heptulosonate 7-phosphate (DAHP) to dehydroquinate (DHQ). The polypeptide is 3-dehydroquinate synthase (Bartonella tribocorum (strain CIP 105476 / IBS 506)).